The primary structure comprises 138 residues: Cysteine desulfuration protein SufE (138 aa).

C51 functions as the Cysteine persulfide intermediate in the catalytic mechanism.

It belongs to the SufE family. Homodimer. Interacts with SufS.

The protein localises to the cytoplasm. It participates in cofactor biosynthesis; iron-sulfur cluster biosynthesis. In terms of biological role, participates in cysteine desulfuration mediated by SufS. Cysteine desulfuration mobilizes sulfur from L-cysteine to yield L-alanine and constitutes an essential step in sulfur metabolism for biosynthesis of a variety of sulfur-containing biomolecules. Functions as a sulfur acceptor for SufS, by mediating the direct transfer of the sulfur atom from the S-sulfanylcysteine of SufS, an intermediate product of cysteine desulfuration process. The polypeptide is Cysteine desulfuration protein SufE (Escherichia coli O8 (strain IAI1)).